The following is a 311-amino-acid chain: Ketoisovalerate oxidoreductase subunit VorB (311 aa).

As to quaternary structure, heterotetramer of one alpha, one beta, one delta and one gamma chain.

The enzyme catalyses 3-methyl-2-oxobutanoate + 2 oxidized [2Fe-2S]-[ferredoxin] + CoA = 2-methylpropanoyl-CoA + 2 reduced [2Fe-2S]-[ferredoxin] + CO2 + H(+). This chain is Ketoisovalerate oxidoreductase subunit VorB (vorB), found in Pyrococcus furiosus (strain ATCC 43587 / DSM 3638 / JCM 8422 / Vc1).